We begin with the raw amino-acid sequence, 134 residues long: Small ribosomal subunit protein uS8c (134 aa).

It belongs to the universal ribosomal protein uS8 family. In terms of assembly, part of the 30S ribosomal subunit.

It localises to the plastid. Its subcellular location is the chloroplast. Its function is as follows. One of the primary rRNA binding proteins, it binds directly to 16S rRNA central domain where it helps coordinate assembly of the platform of the 30S subunit. This Chloranthus spicatus (Chulantree) protein is Small ribosomal subunit protein uS8c (rps8).